A 625-amino-acid chain; its full sequence is Threonine--tRNA ligase (625 aa).

The interval 1–147 (MRMLLIHSDY…TIVPEEAKVE (147 aa)) is editing domain. Residues 206 to 505 (PHVRLMLEHE…MQEGKKPMFP (300 aa)) are catalytic. Zn(2+) is bound by residues C298, H350, and H474.

It belongs to the class-II aminoacyl-tRNA synthetase family. In terms of assembly, homodimer. Zn(2+) is required as a cofactor.

It is found in the cytoplasm. The enzyme catalyses tRNA(Thr) + L-threonine + ATP = L-threonyl-tRNA(Thr) + AMP + diphosphate + H(+). Its function is as follows. Catalyzes the attachment of threonine to tRNA(Thr) in a two-step reaction: L-threonine is first activated by ATP to form Thr-AMP and then transferred to the acceptor end of tRNA(Thr). Also edits incorrectly charged L-seryl-tRNA(Thr). In Pyrococcus furiosus (strain ATCC 43587 / DSM 3638 / JCM 8422 / Vc1), this protein is Threonine--tRNA ligase.